The sequence spans 109 residues: Large ribosomal subunit protein uL22 (109 aa).

This sequence belongs to the universal ribosomal protein uL22 family. In terms of assembly, part of the 50S ribosomal subunit.

Its function is as follows. This protein binds specifically to 23S rRNA; its binding is stimulated by other ribosomal proteins, e.g. L4, L17, and L20. It is important during the early stages of 50S assembly. It makes multiple contacts with different domains of the 23S rRNA in the assembled 50S subunit and ribosome. The globular domain of the protein is located near the polypeptide exit tunnel on the outside of the subunit, while an extended beta-hairpin is found that lines the wall of the exit tunnel in the center of the 70S ribosome. The chain is Large ribosomal subunit protein uL22 from Psychrobacter sp. (strain PRwf-1).